Here is a 260-residue protein sequence, read N- to C-terminus: Transcriptional activator protein AsaR (260 aa).

An HTH luxR-type domain is found at 176–241 (EDDPQEALTD…QAIAKGVSSG (66 aa)). Positions 200–219 (SGEIACILGITERTVNYHLN) form a DNA-binding region, H-T-H motif.

The protein belongs to the autoinducer-regulated transcriptional regulatory protein family.

In terms of biological role, functions as a BHL-responsive transcriptional regulator. The sequence is that of Transcriptional activator protein AsaR from Aeromonas salmonicida.